Reading from the N-terminus, the 290-residue chain is Arginine N-acetyltransferase avaD (290 aa).

An acetyl-CoA-binding site is contributed by 157-163 (NQAHFEA).

This sequence belongs to the acetyltransferase family. GCN5 subfamily.

It participates in secondary metabolite metabolism. Arginine N-acetyltransferase; part of the cluster that mediates the biosynthesis of a highly modified cyclo-arginine-tryptophan dipeptide (cRW). Within the pathway, avaD catalyzes the N-acetylation of the guanidine group. The first step of the pathway is perfornmed by the arginine-containing cyclodipeptide synthase (RCPDS) avaA that acts as the scaffold-generating enzyme and is responsible for formation of the cyclo-Arg-Trp (cRW) diketopiperazine. AvaB then acts as a multifunctional flavoenzyme that is responsible for generating the cyclo-Arg-formylkynurenine DKP, which can be deformylated by avaC. AvaB then further catalyzes an additional N-oxidation followed by cyclization and dehydration. The next step is an N-acetylation of the guanidine group catalyzed by the arginine N-acetyltransferase avaD. The roles of the additional enzymes identified within the ava cluster still have to be determined. The chain is Arginine N-acetyltransferase avaD from Aspergillus versicolor.